The primary structure comprises 780 residues: Oocyte zinc finger protein XlCOF8.4 (780 aa).

15 C2H2-type zinc fingers span residues 250–272 (FPCSECGKCFAGSSELNVHRRTH), 278–300 (FSCSQCGKCFSNQTKLKYHHRTH), 306–328 (FSCSECGKCFSTPHVRARHQKTH), 334–356 (FPCSECGKCFARSSDVTVHRRTH), 362–384 (YSCSQCGKCFTRSSDLNVHRRTH), 390–412 (YSCSHCGKCFTTSSELNVHRRTH), 418–440 (YSCSECGKSFPTSSEFTSHWKTH), 446–468 (FSCVQCGKCFSKDTHLKYHYRTH), 474–496 (FSCFECGKCFTHNGSLKVHLKIH), 618–640 (LSCSECGKCFSTYHVLARHQKTH), 646–668 (FSCSECEKCYARSSDLNVHRRTH), 674–696 (YSCSECGKCFTRSSDFNVHRRTH), 702–724 (YSCSECGRCFPTSSVLTSHWRTH), 730–752 (FSCTECGKCFSRETYLKYHHRTH), and 758–780 (FSCSECGKCFTCNSSLKVHFQLH).

It belongs to the krueppel C2H2-type zinc-finger protein family.

Its subcellular location is the nucleus. Its function is as follows. May be involved in transcriptional regulation. The sequence is that of Oocyte zinc finger protein XlCOF8.4 from Xenopus laevis (African clawed frog).